Here is a 219-residue protein sequence, read N- to C-terminus: Probable GTP-binding protein EngB (219 aa).

The 175-residue stretch at 31–205 folds into the EngB-type G domain; it reads VGVEIAFAGR…LSILNEWCHP (175 aa). GTP is bound by residues 39–46, 66–70, 84–87, 151–154, and 184–186; these read GRSNAGKS, GRTQL, DLPG, TKSD, and FSA. Mg(2+)-binding residues include serine 46 and threonine 68.

This sequence belongs to the TRAFAC class TrmE-Era-EngA-EngB-Septin-like GTPase superfamily. EngB GTPase family. The cofactor is Mg(2+).

Necessary for normal cell division and for the maintenance of normal septation. The sequence is that of Probable GTP-binding protein EngB from Shewanella putrefaciens (strain CN-32 / ATCC BAA-453).